The chain runs to 224 residues: UPF0758 protein AFE_0358 (224 aa).

The MPN domain occupies G102–W224. Positions 173, 175, and 186 each coordinate Zn(2+). Positions H173–D186 match the JAMM motif motif.

Belongs to the UPF0758 family.

This is UPF0758 protein AFE_0358 from Acidithiobacillus ferrooxidans (strain ATCC 23270 / DSM 14882 / CIP 104768 / NCIMB 8455) (Ferrobacillus ferrooxidans (strain ATCC 23270)).